A 165-amino-acid chain; its full sequence is Small ribosomal subunit protein bS16 (165 aa).

The protein belongs to the bacterial ribosomal protein bS16 family.

This chain is Small ribosomal subunit protein bS16, found in Azobacteroides pseudotrichonymphae genomovar. CFP2.